A 311-amino-acid chain; its full sequence is Acetyl-coenzyme A carboxylase carboxyl transferase subunit beta (311 aa).

The CoA carboxyltransferase N-terminal domain occupies 27-296 (LWTKCGHCSA…AEAADAPEAG (270 aa)). Residues cysteine 31, cysteine 34, cysteine 50, and cysteine 53 each contribute to the Zn(2+) site. The segment at 31-53 (CGHCSAVLYRPELERNQEVCPKC) adopts a C4-type zinc-finger fold. The segment covering 286–299 (AAEAADAPEAGEQP) has biased composition (low complexity). Positions 286–311 (AAEAADAPEAGEQPSEATDPVGEHWD) are disordered.

Belongs to the AccD/PCCB family. In terms of assembly, acetyl-CoA carboxylase is a heterohexamer composed of biotin carboxyl carrier protein (AccB), biotin carboxylase (AccC) and two subunits each of ACCase subunit alpha (AccA) and ACCase subunit beta (AccD). The cofactor is Zn(2+).

The protein resides in the cytoplasm. It catalyses the reaction N(6)-carboxybiotinyl-L-lysyl-[protein] + acetyl-CoA = N(6)-biotinyl-L-lysyl-[protein] + malonyl-CoA. The protein operates within lipid metabolism; malonyl-CoA biosynthesis; malonyl-CoA from acetyl-CoA: step 1/1. Functionally, component of the acetyl coenzyme A carboxylase (ACC) complex. Biotin carboxylase (BC) catalyzes the carboxylation of biotin on its carrier protein (BCCP) and then the CO(2) group is transferred by the transcarboxylase to acetyl-CoA to form malonyl-CoA. This is Acetyl-coenzyme A carboxylase carboxyl transferase subunit beta from Alkalilimnicola ehrlichii (strain ATCC BAA-1101 / DSM 17681 / MLHE-1).